The chain runs to 249 residues: UDP-N-acetyl-D-mannosaminuronic acid transferase (249 aa).

This sequence belongs to the glycosyltransferase 26 family.

It catalyses the reaction UDP-N-acetyl-alpha-D-mannosaminouronate + N-acetyl-alpha-D-glucosaminyl-di-trans,octa-cis-undecaprenyl diphosphate = beta-D-ManNAcA-(1-&gt;4)-alpha-D-GlcNAc-di-trans,octa-cis-undecaprenyl diphosphate + UDP + H(+). The protein operates within bacterial outer membrane biogenesis; enterobacterial common antigen biosynthesis. In terms of biological role, catalyzes the synthesis of Und-PP-GlcNAc-ManNAcA (Lipid II), the second lipid-linked intermediate involved in enterobacterial common antigen (ECA) synthesis. The chain is UDP-N-acetyl-D-mannosaminuronic acid transferase from Pectobacterium carotovorum subsp. carotovorum (strain PC1).